Here is a 501-residue protein sequence, read N- to C-terminus: Glycogenin-2 (501 aa).

Leucine 42, threonine 44, asparagine 45, tyrosine 48, and arginine 110 together coordinate UDP. Leucine 42, threonine 44, asparagine 45, tyrosine 48, arginine 110, lysine 119, aspartate 135, alanine 136, aspartate 137, asparagine 166, serine 167, aspartate 193, aspartate 196, and glutamine 197 together coordinate UDP-alpha-D-glucose. The UDP site is built by aspartate 135, alanine 136, and aspartate 137. Aspartate 135 provides a ligand contact to Mn(2+). Aspartate 137 serves as a coordination point for Mn(2+). An O-linked (Glc...) tyrosine glycan is attached at tyrosine 228. Positions 245, 248, and 251 each coordinate UDP. Position 245 (histidine 245) interacts with Mn(2+). 2 residues coordinate UDP-alpha-D-glucose: glycine 248 and lysine 251. A phosphoserine mark is found at serine 368, serine 399, and serine 459.

Homodimer, tightly complexed to glycogen synthase. Mn(2+) is required as a cofactor. Post-translationally, self-glycosylated by the transfer of glucose residues from UDP-glucose to itself, forming an alpha-1,4-glycan of around 10 residues attached to Tyr-228. Detected in liver (at protein level). Expressed preferentially in liver, heart, and pancreas.

Its subcellular location is the cytoplasm. It localises to the nucleus. It catalyses the reaction L-tyrosyl-[glycogenin] + UDP-alpha-D-glucose = alpha-D-glucosyl-L-tyrosyl-[glycogenin] + UDP + H(+). The enzyme catalyses [1,4-alpha-D-glucosyl](n)-L-tyrosyl-[glycogenin] + UDP-alpha-D-glucose = [1,4-alpha-D-glucosyl](n+1)-L-tyrosyl-[glycogenin] + UDP + H(+). Its pathway is glycan biosynthesis; glycogen biosynthesis. Its function is as follows. Glycogenin participates in the glycogen biosynthetic process along with glycogen synthase and glycogen branching enzyme. It catalyzes the formation of a short alpha (1,4)-glucosyl chain covalently attached via a glucose 1-O-tyrosyl linkage to internal tyrosine residues and these chains act as primers for the elongation reaction catalyzed by glycogen synthase. The protein is Glycogenin-2 (GYG2) of Homo sapiens (Human).